Reading from the N-terminus, the 87-residue chain is U3-theraphotoxin-Hhn1a 17 (87 aa).

The signal sequence occupies residues 1–24; sequence MVNVKASMFLTFAGLVLLFVVCYA. Residues 25 to 52 constitute a propeptide that is removed on maturation; it reads SESEEKEFPKEMLSSIFAVDNDFKQEER. 3 disulfide bridges follow: cysteine 54–cysteine 67, cysteine 61–cysteine 72, and cysteine 66–cysteine 79.

This sequence belongs to the neurotoxin 10 (Hwtx-1) family. 51 (Hntx-8) subfamily. Hntx-8 sub-subfamily. As to expression, expressed by the venom gland.

It localises to the secreted. In terms of biological role, ion channel inhibitor. The protein is U3-theraphotoxin-Hhn1a 17 of Cyriopagopus hainanus (Chinese bird spider).